Reading from the N-terminus, the 243-residue chain is Ras-related protein Rab-12 (243 aa).

Position 1 is an N-acetylmethionine (Met-1). The tract at residues 1 to 36 (MDPSAALHRRPAGGSLGAVSPALSGGQARRRKQPPR) is disordered. Residues Ser-15, Ser-20, and Ser-24 each carry the phosphoserine modification. Positions 51, 52, 53, 54, 55, 72, and 73 each coordinate GTP. A Mg(2+)-binding site is contributed by Thr-55. Short sequence motifs (switch) lie at residues 64–78 (DTFC…GVDF) and 96–113 (DTAG…YYRS). 2 residues coordinate Mg(2+): Thr-73 and Asp-96. Gly-99 lines the GTP pocket. Ser-105 carries the post-translational modification Phosphoserine; by LRRK2. GTP contacts are provided by Asn-154, Lys-155, Asp-157, Ser-185, Ala-186, and Lys-187. Residues Cys-242 and Cys-243 are each lipidated (S-geranylgeranyl cysteine).

This sequence belongs to the small GTPase superfamily. Rab family. In terms of assembly, interacts with RABIF and OPTN. Interacts with LRRK2; interaction facilitates phosphorylation of Ser-105. Interacts with GDI1, GDI2, CHM and CHML; these interactions are disrupted by phosphorylation on Ser-105. Interacts with RILPL1 and RILPL2; these interactions are dependent on phosphorylation of Ser-105. Mg(2+) serves as cofactor. Post-translationally, phosphorylation of Ser-105 in the switch II region by LRRK2 prevents the association of RAB regulatory proteins, including CHM, CHML and RAB GDP dissociation inhibitors GDI1 and GDI2. In terms of tissue distribution, ubiquitously expressed.

The protein localises to the recycling endosome membrane. The protein resides in the lysosome membrane. It localises to the golgi apparatus membrane. Its subcellular location is the cytoplasmic vesicle. It is found in the autophagosome. The enzyme catalyses GTP + H2O = GDP + phosphate + H(+). Its activity is regulated as follows. Regulated by guanine nucleotide exchange factors (GEFs) including DENND3 which promote the exchange of bound GDP for free GTP. Regulated by GTPase activating proteins (GAPs) which increase the GTP hydrolysis activity. Inhibited by GDP dissociation inhibitors (GDIs). In terms of biological role, the small GTPases Rab are key regulators of intracellular membrane trafficking, from the formation of transport vesicles to their fusion with membranes. Rabs cycle between an inactive GDP-bound form and an active GTP-bound form that is able to recruit to membranes different set of downstream effectors directly responsible for vesicle formation, movement, tethering and fusion. RAB12 may play a role in protein transport from recycling endosomes to lysosomes regulating, for instance, the degradation of the transferrin receptor. Involved in autophagy. The polypeptide is Ras-related protein Rab-12 (Mus musculus (Mouse)).